The chain runs to 445 residues: Adenylyltransferase and sulfurtransferase MOCS3 (445 aa).

The tract at residues 49-70 is disordered; that stretch reads LPPSAAAEVEPTGSPSSSSSAA. ATP contacts are provided by residues G106, D127, 134–138, K151, and 170–171; these read DNLHR and NN. Zn(2+) contacts are provided by C211 and C214. Catalysis depends on C228, which acts as the Glycyl thioester intermediate; for adenylyltransferase activity. The Zn(2+) site is built by C286 and C289. The 102-residue stretch at 342–443 folds into the Rhodanese domain; it reads SGRPHLLVDV…WAKEVDPSFL (102 aa). C403 (cysteine persulfide intermediate; for sulfurtransferase activity) is an active-site residue.

It in the N-terminal section; belongs to the HesA/MoeB/ThiF family. UBA4 subfamily. Zn(2+) is required as a cofactor.

It localises to the cytoplasm. The protein resides in the cytosol. The enzyme catalyses [molybdopterin-synthase sulfur-carrier protein]-C-terminal Gly-Gly + ATP + H(+) = [molybdopterin-synthase sulfur-carrier protein]-C-terminal Gly-Gly-AMP + diphosphate. It catalyses the reaction [molybdopterin-synthase sulfur-carrier protein]-C-terminal Gly-Gly-AMP + S-sulfanyl-L-cysteinyl-[cysteine desulfurase] + AH2 = [molybdopterin-synthase sulfur-carrier protein]-C-terminal-Gly-aminoethanethioate + L-cysteinyl-[cysteine desulfurase] + A + AMP + 2 H(+). The protein operates within tRNA modification; 5-methoxycarbonylmethyl-2-thiouridine-tRNA biosynthesis. Its pathway is cofactor biosynthesis; molybdopterin biosynthesis. Plays a central role in 2-thiolation of mcm(5)S(2)U at tRNA wobble positions of cytosolic tRNA(Lys), tRNA(Glu) and tRNA(Gln). Also essential during biosynthesis of the molybdenum cofactor. Acts by mediating the C-terminal thiocarboxylation of sulfur carriers URM1 and MOCS2A. Its N-terminus first activates URM1 and MOCS2A as acyl-adenylates (-COAMP), then the persulfide sulfur on the catalytic cysteine is transferred to URM1 and MOCS2A to form thiocarboxylation (-COSH) of their C-terminus. The reaction probably involves hydrogen sulfide that is generated from the persulfide intermediate and that acts as a nucleophile towards URM1 and MOCS2A. Subsequently, a transient disulfide bond is formed. Does not use thiosulfate as sulfur donor; NFS1 probably acting as a sulfur donor for thiocarboxylation reactions. The polypeptide is Adenylyltransferase and sulfurtransferase MOCS3 (Oryza sativa subsp. japonica (Rice)).